We begin with the raw amino-acid sequence, 103 residues long: Small ribosomal subunit protein uS14c (103 aa).

A disordered region spans residues 34–56; the sequence is KVSPLSLSEKTKMREKLQSLPRN.

Belongs to the universal ribosomal protein uS14 family. As to quaternary structure, part of the 30S ribosomal subunit.

Its subcellular location is the plastid. The protein resides in the chloroplast. Functionally, binds 16S rRNA, required for the assembly of 30S particles. The chain is Small ribosomal subunit protein uS14c from Triticum aestivum (Wheat).